The following is a 183-amino-acid chain: UPF0398 protein MCCL_1095 (183 aa).

Belongs to the UPF0398 family.

In Macrococcus caseolyticus (strain JCSC5402) (Macrococcoides caseolyticum), this protein is UPF0398 protein MCCL_1095.